Consider the following 215-residue polypeptide: Octanoyltransferase (215 aa).

The region spanning 42–215 (QNTPDEIWLL…AEKLKARLKQ (174 aa)) is the BPL/LPL catalytic domain. Substrate contacts are provided by residues 81–88 (RGGQITYH), 148–150 (ALG), and 161–163 (GLA). Catalysis depends on Cys179, which acts as the Acyl-thioester intermediate.

Belongs to the LipB family.

It is found in the cytoplasm. The catalysed reaction is octanoyl-[ACP] + L-lysyl-[protein] = N(6)-octanoyl-L-lysyl-[protein] + holo-[ACP] + H(+). The protein operates within protein modification; protein lipoylation via endogenous pathway; protein N(6)-(lipoyl)lysine from octanoyl-[acyl-carrier-protein]: step 1/2. Functionally, catalyzes the transfer of endogenously produced octanoic acid from octanoyl-acyl-carrier-protein onto the lipoyl domains of lipoate-dependent enzymes. Lipoyl-ACP can also act as a substrate although octanoyl-ACP is likely to be the physiological substrate. This Nitrosospira multiformis (strain ATCC 25196 / NCIMB 11849 / C 71) protein is Octanoyltransferase.